A 296-amino-acid chain; its full sequence is Phosphoribosylaminoimidazole-succinocarboxamide synthase (296 aa).

The protein belongs to the SAICAR synthetase family.

The enzyme catalyses 5-amino-1-(5-phospho-D-ribosyl)imidazole-4-carboxylate + L-aspartate + ATP = (2S)-2-[5-amino-1-(5-phospho-beta-D-ribosyl)imidazole-4-carboxamido]succinate + ADP + phosphate + 2 H(+). It participates in purine metabolism; IMP biosynthesis via de novo pathway; 5-amino-1-(5-phospho-D-ribosyl)imidazole-4-carboxamide from 5-amino-1-(5-phospho-D-ribosyl)imidazole-4-carboxylate: step 1/2. The polypeptide is Phosphoribosylaminoimidazole-succinocarboxamide synthase (Geobacter metallireducens (strain ATCC 53774 / DSM 7210 / GS-15)).